The following is a 11103-amino-acid chain: MGTIKTKFKNNYLKNSYLFIIYIILFNLVIGIANSEALGVPSKIRPGRYGEICSNCTPKKSYLDFSLISPTGFELVDNAELEWTKDFPSVKVSVNGSQNPVIMGQTHHYSELLENVNFFNITGRTDIKSLMHYSCGNATSSVVFEFTKPVERFLLLIFGVNSEVSLVVDSYDAYGYPVNMLNWDTLDHGLLSTHYPSNTSIHHPPAVKQSHNSATLDLTWSNKGFNTYIILEPNQMISKIILSVKGVHCNEEICKGQALYYSLVALGDCQDSNLFAVGNYVFFDVNRDGVHETTELFAPNVKVELYDAISSTRLIASTFTDLNGKYFFDNLPEGAYVVKIYPPSDYMISSNGPDNVINAITSFSNSFVLTINGTNVVPVPPNSGINATYWNPKINGGITLIRYAISGNVCNDHDDNGVSDGNLSGITVQLTTPSHVVLKTAQTDYAGNYVFDDLSEGVYSVHFILPENYYFSTASLSRLSPGGYLDGLQLSQNTTTLTQSSPNVLILPTTNHLLSNVNICMKTKTFALSGFTFKDANSDGLYLLANQDLPLPGVVVQLFKSGQSAIPLATTTTDSLGKYFFDLIVSGDYDIHFNAPDGYHDTKTSSQSLADSNGWIRSAKVNDNTVVPNTNPSIKATDVLQNQNAGFTLNQYGIGSHVWLDSNRDSERGPTETTGVANVTVNLLLNGVVVATTKTSADGSYSFDGLAAGVYNAQFILPSNLYKFSPQFDESRPDTTGLVQQINLTPQNPQLVAGTGLPPYPLANKIDPTVNAGVYKVDFAIGDLVWIDKDSNGVFNPATDQGAPFVTINLVNEKTSELLTTQSAQDGSYSFNHLAAGNYCIHFVIPQGYKAVTTSYYSVGDENGEVCFTLNVENSDSASSYTKHYLTPLLGDYIDDTLDQGIVMSTFAIGDFVFIDSNRDGLYQSSTETPAEGVKVVLSQSGHLVADTLTDSKGHYVFDNIQTGVYDIAFIIPSGYQVTSPSSDNKANSLGLVSTIDLSFNDDQVTPVNPSIDGPLKASFIDRTIDAGLVRPLFTIGTHAWIDENNNLIDDDISNGLPNITMTLINNAEGGKVVQSVSTDSKGQYSFTNVPEGDYCVVATNSNPSLSLLPKSADSPFDAAGKYCFVLVAGDNPSKTDANIGYTTKLSVGQFIWVDSNNDGSFDKSKENLLSNTLVTVTITNQKTGQIQSVETSKGDYQFIGLLPGDYCVQMTIPDNFKQVVMGVDSPFNSSAISCFNLNSTSRNDINFGLVPLYPVGDKIWIDPFNTGKQLPDSPGISNIPLSLISQKTNQIISSVVTDSNGKYQFEDVPPGDYCIKATINRDQYSLVNKSLDSPFQVSNTNNVESCFTVSGPLDNQDLGLTPFLEIGTFVWVDGKGNNLYEKSKNDILKSDVSITLTNIGSGDSVSTITDSEGKYNFNHLLAGDYCIKATQPVPYQFVVTSDDSVVDSKGEYCFKLTESNPNINIGLVPLNSIGSVSWLDKNNNGNREDNEFLPGVELSLQDSNGKVLDTTTTDESGNYKFDNLLPGDYCIIATTPIGSIPVTGSSDNLFVDDKYCLTFTGPQPIDRTDVNPGFVSTLDIGQYVWIDKNNNGKEESDEPLLPGVQVIITSPNGTKIADLVTDENGKYALKDQVPGSYCVQMVIPPHYKQVSQSEDSPFDSDVKYCFDLIDESITNANLGLIPLFNVGDKVWLDPFNTGKQTDDSPPLSDITIRLTDKDGNEISNTKSGPDGKYQFEDVPPGDYCVEADIPKDQYKPVNTSSDSPFSADSTNDSFVTVKYCFTITDHDVKPPIGVTPFYEIGTFVWIDSNNNDKFEQPSDIKKSDVSITLTNSGNGETSTIQTDANGEYNFNHLLASDYCIKATEPNKYQFVVTSDDSVVDSTGEYCFKLTQSNPNINIGLVPLNSIGSVSWLDKNNNGNKEDNEFLPGVELSLQDSNGKVLETTTTDESGNYKFDNLLPGDYCIVTTTPIGSIPVTSSPDNLFVDDKYCLTFTGPQPIDRTDVNPGFVSTLDIGQYVWIDKNNNGKEEPDEPLLPGVQVIITSPNGTSIANLVTDENGKYALKDQVPGSYCVQMIIPDHYKQVAQSEDSPFDLDVKYCFDLDDKSITNANLGLIPLYPIGDTVWLDPFNTGKRTDDSPGVEGIELNLVDKDGKVIQSTTSGPNGKYQFEDVPPGDYCIEAKIPNDQYKPVNTSSDSPFSPTSDNSIVKSCLTVSGPLDNQNLGLSPFYEIGTIVWIDSNNNDKFEQPSDIGKSDVSITLTNSGNGETSTIQTDVDGNYNFNHLLAGDYCIKATEPNKYQFVVTSDDSVVNSTGEYCFKLTQSNPNINIGLVPLNSIGSVSWLDKNNNGNKEDNEFLPGVELSLQDSNGKVLDTTTTDESGNYKFDNLLPGDYCIVATTPIGSIPVTSSPDNLFVNNKYCLTFTGPQPIDRTDVNPGFVSTLDIGQYVWIDKNNNGKEESDEPLLPGVQVIITSPNGTKIADLVTDENGNYALKDQVPGSYCVQMVIPPHYKQVSQSEDSPFDLDVKYCFDLDDKSITNANLGLIPLFNVGDKVWLDPFNTGKQTDDSPPLSDITIRLTDKDGNEITNTKSGPDGKYQFEDVPPGDYCVEADIPKDQYKPVNTSSDSPFSVDSTNDNFVTVKYCFTITDHDVKPPIGVTPFYEIGTFVWIDSNNNDKFEQPSDIKKSDVSITLTNSGNGETSTIQTDADGEYNFNHLLAGDYCIKATEPNKYQFVVTSDDSVVDSTGEYCFKLTQSNPNINIGLVPLNSIGSVSWLDKNNNGNKEDNEFLPGVELSLQDPNGTVFETTTTDESGSYKFGNLLPGDYCIVATTPIGSIPVTSSPDNLFVNNKYCLTFTGPQPIDRIDVNPGFVSTLDIGQYVWIDKNNNGKEESDEPLLPGVQVIITSSNGTKIADLVTDENGKYALKDQVPGSYCVQMIIPDHYKQVSQSEDSPFDSDVKYCFDLIDESITNANLGLIPLYPIGDTVWLDPFNTGKRTDDSPGLEGIELQLVDKDGKVIQSTTSGPDGKYQFEDVPPGDYCIEATIPNDTYQSVNTSSDSPFSPTSDNSIVKSCFAVSGPLDNQNLGLSPFYEIGTIVWIDSNNNDKFEQPNDIGKSNVSITLTNSGNGEMYSTISNTDGEYNFNHLLAGDYCIKVTEPDQYKFVVTSDDSVVDSTGEYCFKLTESNPNINIGLVPLNSIGSVSWLDKNNDGKRQDNEFLPGVELSLQDPNGIVIQTITTDSDGNYYFDNLLPGDYCISATTPIGSIPVTSSPDNLFVDGKYCLTFTGPLPTDRTDVNPGFVSTLDIGQYVWIDKNNNGKEEPDEPLLPGVQVIITSSNGTKIADLVTDENGKYALKDQVPGSYCVQMIISDHYKQVAQSEESPFDSDVKYCFDLIDESITNANLGLIPLYPIGDTVWLDQFNTGKRTDDSPGVEGIELQLVDKDGKVIQSTTSGPDGKYQFEDVPPGDYCIEATIPNDQYKPVNTSSDSPFSPTSDESIVKSCFAVSGPLDNQNLGLSLFYEIGTMVWIDSNNNGKFEQPSDVLKSDVSITLTNSGNGETSTIQTDVDGNYNFNHLLAGDYCIKATQPDQYQFVVTSDDSVVDSTGEYCFKLTQSNPNINIGLVPLNSIGSVSWLDKNNNGKKEDNEFLPGVELSLQDSNGKVLDTTTTDESGSYKFDNLLPGDYCIVTTTPIGSIPVTSSPDNLFVNNKYCLTFTGPQPIDRTDVNPGFVSTLDIGQYVWIDKNNNGKEEPDEPLLPGVQVIITSPNGTSIANLVTDENGKYTLKDQVPGSYCVQMIIPPHYKQVAQSEDSPFDLDVKYCFDLVNESISNANLGLVPLFKVGDKVWLDPFNTGKQTDDSPPLSDITIRLTDKDGKVIQSTTSGPDGKYQFEDVPPGDYCVEAYIPKDQYKPVNTSSDSPFSVDSTNDNFVTVRYCFTITDHDVKPPIGVTPFYEIGTIVWIDSNNNDRFEQPSDIGKSDVSITLTNSGNGETSTIQTDVDGEYNFNHLLAGDYCIKATEPNKYQFVVTSDDSVVDSTGEYCFKLTQSNPNINIGLVPLNSIGSVSWLDKNNNGNKEDNEFLPGVELSLQDSNGKVLDTTTTDESGNYKFDNLLPGDYCIVVTTPIGSIPVTSSPDNLFVDDKYCLTFTGPQPIDRTDVNPGFVSTLDIGQYVWIDKNNNGKEESDEPLLPGVQVIITSPNGTSIANLVTDENGKYTLKDQVPGSYCVQMVSPPHYKQVSQSEDSPFDSDIKYCFDLDDKSITNANLGLVPLFNVGDKVWLDPFNTGKQTDDSPPLSDITIRLTDKDGNEITKTKSRPDGNENSNTKSGPDGKYQFEDVPPGDYCVEADIPKDQYKPVNTSSDSPFSVDSTNDNFVTVKYCFTITDHDVKPPIGVTPFYEIGTFVWIDSNNNDKFEQPSDIKKSDVSITLTNSGNGETSTIQTDVDGNYNFNHLLAGDYCIKATEPNKYQFVVTSDDSVVDSTGEYCFKLTESNPNINIGLVPLNSIGSVSWLDKNNNGKKEDNEFLPGVELSLQDSNGKVLDTTTTDESGNYKFDNLLPGDYCIVATTPIGSIPVTSSPDNLFVNNKYCLTFTGPQPIDRTDVNPGFVSTLDIGQYVWIDKNNNGKEESDEPLLPGVQVIITSSNGTKIADLVTDENGKYALKDQVPGSYCVQMIIPDHYKQVSQSEDSPFDSDVKYCFDLEDKSITNANLGLVPLYNLGDTVWLDPFNTGKRTDDSPGVEGIPLTLIDKYGNSIQSTASGPNGKYQFEDVPPGDYCIEASVPRKYQVENTSSDSPFSVVLPLPTSSIEPIKSRYCFTVTEPVNNANLGLIPFLEIGTFVWIDSNNNDKFEQPSDIKQSDVPITLTNSGNGETSTIQTDVDGNYNFNHLLAGDYCIKATEPNKYQFVVTSDDSVVNSTGEYCFKLTESNPNINIGLVPLNSIGSFAWLDKDNDGLASEGESLPGVELSLQDSNGKVLETTTTDESGNYKFDNLLPGDYCIVATTPIGSIPVTSSPDNLFVDDKYCLTFTGPQPIDRYDVNPGFVSTLDIGQYVWIDKNNNGKEESDEPLLPGVQVIITSPNGTKIADLVTDENGNYALKDQVPGSYCIQMIIPPHYKQVAQSEDSPFDSDVKYCFDLIDESITNANLGLVPLYPIGDTVWLDPFNTGKRTDDSPGLEGIELQLVDKDGKVIQSTTSGPNGKYQFEDVPPGDYCIEATISNDILRAVNTSSDSPFSPTSDESIVKSCFAVSGPLDNQNLGLSPFYEIGTIVWIDSNNNDKFEQPSDIGKSNVSITLTNSGNGETSTIQTDVDGNYNFNHLLAGDYCIKVTQPDQYQFVVTSDDSVVNSTGEYCFKLTQSNPNINIGLVPLNSIGSVSWLDKNNNGNKEDNEFLPGVELSLQDSNGKVLDTTTTDESGNYKFDNLLPGDYCIVSTTPIGSIPVTSSPDNLFVDDKYCLTFTGPQPIDRYDVNPGFVSTLDIGQYVWIDKNNNGKEESDEPLLPGVQVIITSPNGTKIADLVTDENGNYALKDQVPGSYCVQMVIPPHYKQVAQSEDSPFDSDVKYCFDLIDESITNANLGLIPLFKVGDKVWLDPFNTGKQTDDSPPLSDITIRLTDKDGNEITNTKSGPDGKYQFEDVPPGDYCVEADILKDQYKPVNTSSDSPFSVDSTNDNFVTVKYCFTITDHDVKPPIGVTPFYEIGTFVWIDSNNNDNFEQPSDIKKSDVSITLTNSGNGETSTIQTDVDGNYNFNHLLAGDYCIKVTEPNKYQFVVTSDDSVVDSTGEYCFKLTQSNPNINIGLVPLNSIGSVSWLDKNNNGNKEDNEFLPGVELSLQDSNGKVLDTTTTDESGNYKFDNLLPGDYCIVATTPIGSIPVTSSPDNLFVDDKYCLTFTGPQPIDRTDVNPGFVSTLDIGQYVWIDKNNNGKEESDEPLLPGVQVIITSPNGTKIADLVTDENGNYALKDQVPGPYCVQMVIPPHYKQVVQSEDSPFDSDVKYCFDLVDKSITNANLGLIPLYPIGDTVWLDPFNTGKRTDDSPGVEGIELNLVDKDGKVIQSTTSGPDGKYQFEDVPPGDYCIEATIPNDQYKPVNTSSDSPFSPTSDESIVKSCFKVSGPLDNQNLGLSPFYEIGTIVWIDSNNNDKFEQPSDIGKSNVSITLTNSGNGETSTIQTDVDGNYNFNHLLAGDYCIKATQPDQYQFVVTSDDSVIDSTGEYCFKLTQSNPNINIGLVPLNSIGSVSWLDKNNNGNKEDNEFLPGVELSLQDSNGKVLETTTTDESGNYKFDNLLPGDYCIVATTPIGSIPVTSSPDNLFVNNKYCLTFTGPQPIDRYDVNPGFVSTLDIGQYVWIDKNNNGKEESDEPLLPGVQVIITSPNGTKIADLVTDENGNYALKDQVPGSYCVQMVIPPHYKQDAQSEDSPFDSDVKYCFDLVDKSITNANLGLIPLFNVGDKVWLDPFNTGKQTDDSPPLSDITIRLTDKDGNEITNTKSGPDGKYQFEDVPPGDYCVEADILKDQYKPVNTSSDSPFSADSTNDSFVTVKYCFTITDHDVKPPIGVTPFYEIGTFVWIDSNNNDKFEQPSDIKKSDVSITLTNSGNGETSTIQTDADGEYNFNHLLAGDYCIKATEPNKYQFVVTSDDSVVDSTGEYCFKLTQSNPNINIGLVPLNSIGTFAWLDKDNDGLATAEESLEGVELSLQDPNGTVLQTITTDESGNYKFDNLLPGDYCIVGTTPIGSIPVTGSPDNLFVNNKYCLTFTGPQPIDRTDVNPGFVPTLDIGQYVWIDKNNNGKEEPDEPLLPGVQVIITSPNGTSIANLFTDENGKYALKDQVPGSYCVQMIIPDHYKQVNQSEDSPFDSDVKYCFDLEDKSITNANLGLVPLYNLGDSVWLDPFNTGKRTDDSPGVEGIPLTLIDKYGNSIQSTASGPNGKYQFEDVPPGDYCIEASVPRKYQVENTSSDSPFSVVLPLPTSSIEPIKSRYCFTVTEPVNNANLGLIPFLEIGTFVWIDSNNNDKFEQPSDIKQSDVSITLTNSGNGETSTIQTDSNGNYKFNNLLAGDYCIKVTEPNKYQFVVTSDDSVVNSTGEYCFKLTQSNPNINIGLVPLNSIGTFAWLDKDNDGLATAGESLAGVELSLQDPNGTLFETTTTDESGYYLFYELLPGDYCIVATTPIGSIPVTGSPDNLFVNNKYCLTFTGPQPIDRYDVNPGFVSTLDIGQYVWIDKNNNGKEEPDEPLLPGVQVIITSPNGTKIADLVTDENGNYALKDQVPGSYCVQMVIPPHYKQDAQSEDSPFDSDVKYCFDLVDKSITNANLGLIPLFNVGDKVWLDPFNTGKQTDDSPPLSDITIRLTDKDGNEITNTKSGPDGKYQFEDVPPGDYCVEADIPKDQYKPVNTSSDSPFSADSTNDSFVTVKYCFTITDHDVKPPIGVTPFYEIGTFVWIDSNNNDKFEQPSDIKKSDVSITLTNSGNGETSTIQTDADGEYNFNHLLAGDYCIKATEPNKYQFVVTSDDSVVDSTGEYCFKLTQSNPNINIGLVPLNSIGSVSWLDKNNNGKRENNEFLPGVELSLQDSNGKVLDTTTTTDESGNYKFDNLLPGDYCIVGTTPIGSIPVTGSPDNLFVDNKYCLTFTGPQPIDRTDVNPGFVSTLDIGQYVWIDKNNNGKEESDEPLLTGVQVIITSPNGTSIANLVTDENGKYALKDQVPGSYCVQMIIPDHYKQVAQSEDSPFDSDVKYCFDLVDTSITNANLGLIPLYPIGDSVWLDPFNTGKRTDDSPGVEGIELNLVDKDDKVIQSTTSGPDGKYQFEDVPPGDYCIEAEFPSDTYQAVNTSSDSPFSPTSNESIVKSCFKVSGPLDNQNLGLSPFYEIGTIVWIDSNNNDKFEQPSDIGKSDVSITLTNSGNGETSTIQTDVDGNYNFNHLLAGDYCIKVTQPDQYQFVVTSDDSVVDSTGEYCFKLTQSNPNINIGLVPLNSIGSVSWLDKNNNGKKEDNEFLPGVELSLQDPSGKVLDTTTTDESGNYKFDNLLPGDYCIVATTPIGSIPVTSSPDNLFVNNKYCLTFTGPQPIDRTDVNPGFVSTLDIGQYVWIDKNNNGKEEPDEPLLPGVQVIITSPNGTKIADLVTDENGKYALKDQVPGPYCVQMVIPDHYKQVAQSEDSPFDSDVKYCFDLVDKSIANANLGLIPLYPIGDTVWLDSFNTGIQLENSPGIPNIVLTLTDKNGNTIIKSIPTDDIGKYQFDDVEPGDYCIKVSVPSDYSPVNKSSDSPFSLSSQSDVESCFTVSGPTDNQDLGLIPLLKIGTIVWIDSNNNNVYDKPVDVGKSEFQIKLTNTGSGQSSTTQTDSNGNYHFDHLLPGNYCIETTTPIKYHFVQPSKDSVVDQTTGKYCFLLTQSNPNINIGISPLNSIGSVSWLDKNNNGNKEDNEFLPGVELSLQDSNGKVLQTTTTNESGNYKFDNLPQGDYCIIATTPIGSIPVTGSSDNLFVNNKYCLTFTGPQPIDRTDVNPGFVPTLDIGQYVWIDKNNNGKEESDEPLLPGIQIHIFSPNGTSIANLVTDENGKYALKDQVPGSYCVQMVIPPHYEQVAQSKDSPFDSDVKYCFDLLDKSITNANLGLIPLYNIGSDAWLDNLNNGVRRNDSLLVPNVTMSLYDNNGNLIETTITNSSGKYQFNDIQPGSYCVRATVPSNYLADSYSEVSPFKNFTDTSPTNPLAELQYCFAVTDSNVLNANIGLIPYLVVDGTTWVDLDLSKFLSSSDLLLPNVTVQLYDKVSGNILAATRSDDKGGYVVPNLLPSADYCVQFEVPPGYIVVVDSDDSVTNSTGGFCFPLFGDMSDVNLGLDTIFGVGYIAWLDINNDGKRQDNEFLSDVELSLIDPLGNVIETTKTDINGNYMFYPLLMGKYCLNATTPLGTIPVTGSKDSPFINGQYCVRLNGHIPYNNTNVNPGFVSTLDIGQYVWIEKNNNGIKELDEPLLPGVSVSLFSPNGTSIANTITDENGKYAFKDQVPGSYCIKMIIPPHYQQVIQSQDSPFNKSTIYCFDLTTSSITNANLGLTPLLTVGDTAWLDPLNTGKRLPTSAGVPNITMTLLDSQGKQINSTITNANGFYQFVDVAPGNYCMSAGPINSALYKFVNTSLDSPFILSTSKNVTTYCFNVNATNLTNVNVGLTPFYTLGDNVWIDKLNNGIKDLDDPLQANVSLSLVNTGNSEIKTTTTNSQGKYSFGQLLAGNYCLTASVPQNFKAVTKSNDSPFSPIGGDSNTQQYCFTLSGNKNDANLGLVPLYCVGKYVWIDINGNGHPEPTEEPYRNLTITLTPNNTALPTQTTTTDVNGNYRFDNLVVGNYCVSLSIIDNYIMTKITNDSVFNPQGLSCFTINYGDPICRNDINGGLIPPIFSIGDFVFRDVNGNGLFDSAQDTPLVNITVRLLNLFNTTLMTTTTDSQGIYHFVNVEQGDYVVQFGYPKQLKPSPITDQSKVNSRGRVSVSLRINSPDVTASIASDKVPTYYINRNIDAGFTTEYLSIGFIVFNDDNKDGQMQPSEMGMANITVFLRSGSNLSQTIATTTTDANGTYIFTHLAPGNYCVSLTVPKEFYPTLLTPTTFNRGDSNAIACTNVSVFSPTVQRFSIPSHTEDTYQDATVNFGLAPYKYAVGTYIWVDKNGNGGAESYEPAVEGITVRIYDSNFNFITSTVTNPSGIYIFDNLYPGVYNLAITPPVGFTISNNTLQDNKANATGYISIDLSQNDKALMLIDSTWNLKANYINIYQDFGIVPPKIAIGRFVFLDINNNGKKDVDEPGIANVTISIGSKTKQTDANGFYIFDNLETGNDCLTFIPPNPTYQLGISGPDNFLKGNNTLCLDIEIYNNTLRTVPSDNLKAFNKNYTFNVGYVPQSFIIGDTIWIDSNNNSLLDNGEVGADGIKVELLVSSDLSPALDILGKPISSQVTTANGKYLFQNVSSGPSYVVRLTIPANSTKYIAGTTYSPILTGGMSRATANGQVIVLNNFTLDTTYGSNTWKNLNNDAGIVIPCYSIGQQSWSDGNLNGIFDINEIGFPYVNLTLFNADGSTPNDIFGKPIQMAVTDVNGKYSIPNVPPGSYYMTVSIPPRYIISNFTTTGLVNNRFFPLNRTTPIFTMPGPDVVTVSSVSRCRQAYNKANVGINTPYVALGVRTFIDTNKNGIFDIDEKPLPNVTVLLLNNNGQPVMGSDGNPLKAVSNSQGYYYIDNVRLGYYIVQFVIPAGYSITPTKLVSTSNQVENNAFPNGRTDAFNLIITSSDIRSRFDNESNLYTAPYLDPTHDAGFVFTTMGVFGYVWNDVLQDGLFEMGSVPPGNFTVQLKSANQAVNGGLTTVPIGTVVATSPVAANGSFSIPNLQLGNYTLTLIPPSGSGWLTTKFNVTGSPTNSLLLGTFNSTMFTLDANDDDNIVCPFSQYKCKPVNLGVIRPSLKNVTGRVFKDYNCNGKYDISGQFGTAKDIPLSKIPVYIYYADSKTPFNSTLTDSTGSYSFFNLVQDGNYLITVGTPALPTGSGDKVETCRPTSVILPNTYTVPAGFADFSFITNEETCNDVPNLSVGCYVIGNSDENGPNTGEPVIVMFPYNSTQHNQITPLSFYYESGTTYGLAYDRSKKQLYASAFTKFGTDYGPGRLNAIYKIDTVTGRNSLYTRIDSFLEKDTEGTDDILGMDISLDTDFRISEIYRTAFGGIVINPYTRSLAVVGLQTRDIIIMPLDTQPNKTNTQRFTVPFGCTRTQDKYFWQPFAINFHQGKYYTGSVCGGPTIPDMNAIIHSFDPVTQVFTKVVTLPLNYSRGCKNFDSNTVCRNSTWQPWIDIDDNPQPVVASITFDGNDMVIGIRDREGDQGSFVSAPDILRICLVNGVYVPERDGKCGGAIGSHTGPSGYKGQIEGPGTGEFYNDNFRKGQIGHDDTGGLSVFQVPGFPEVASASFDATTVFEGVVKFYNNNNGTLRSSFQVYLTDNSDTVNPVTFGKASGLGQLVAHCSPKPITLGSIVFIDTNGNGIQEPWEQGKQGVAVSLLFANGTLIQKQSTDSLGLFKFINPPYQNQQYIITADSVTLSIIPSPLPTSSIPYNAATMVNGKATISNILILDPMIASSRYDLNFGVTN.

Positions 1–35 (MGTIKTKFKNNYLKNSYLFIIYIILFNLVIGIANS) are cleaved as a signal peptide. N-linked (GlcNAc...) asparagine glycosylation is found at Asn-95, Asn-120, Asn-137, and Asn-198. One copy of the Kelch 1 repeat lies at 273–324 (NLFAVGNYVFFDVNRDGVHETTELFAPNVKVELYDAISSTRLIASTFTDLNG). The region spanning 298–359 (APNVKVELYD…SNGPDNVINA (62 aa)) is the CNA-B 1 domain. N-linked (GlcNAc...) asparagine glycans are attached at residues Asn-372, Asn-386, and Asn-422. Residues 423–469 (LSGITVQLTTPSHVVLKTAQTDYAGNYVFDDLSEGVYSVHFILPENY) enclose the CNA-B 2 domain. N-linked (GlcNAc...) asparagine glycosylation is present at Asn-493. 6 consecutive CNA-B domains span residues 551 to 599 (LPGV…PDGY), 676 to 745 (VANV…INLT), 803 to 871 (APFV…FTLN), 931 to 999 (AEGV…IDLS), 1057 to 1095 (LPNITMTLINNAEGGKVVQSVSTDSKGQYSFTNVPEGDY), and 1170 to 1231 (LSNT…FNSS). Asn-678 carries an N-linked (GlcNAc...) asparagine glycan. Asn-1059, Asn-1229, and Asn-1239 each carry an N-linked (GlcNAc...) asparagine glycan. Residues 1277–1314 (ISNIPLSLISQKTNQIISSVVTDSNGKYQFEDVPPGDY) form the CNA-B 9 domain. N-linked (GlcNAc...) asparagine glycosylation is present at Asn-1329. CNA-B domains follow at residues 1391–1458 (SDVS…FKLT), 1494–1530 (LPGVELSLQDSNGKVLDTTTTDESGNYKFDNLLPGDY), 1602–1651 (LPGV…YKQV), 1708–1779 (LSDI…VTVK), 1824–1891 (SDVS…FKLT), 1927–1963 (LPGVELSLQDSNGKVLETTTTDESGNYKFDNLLPGDY), 2035–2086 (LPGV…QVAQ), and 2141–2177 (VEGIELNLVDKDGKVIQSTTSGPNGKYQFEDVPPGDY). Asn-1613 carries N-linked (GlcNAc...) asparagine glycosylation. The tract at residues 1716–1740 (TDKDGNEISNTKSGPDGKYQFEDVP) is disordered. Asn-1759 and Asn-1772 each carry an N-linked (GlcNAc...) asparagine glycan. An N-linked (GlcNAc...) asparagine glycan is attached at Asn-2046. Asn-2192 and Asn-2311 each carry an N-linked (GlcNAc...) asparagine glycan. 8 consecutive CNA-B domains span residues 2254–2321 (SDVS…FKLT), 2357–2402 (LPGV…TPIG), 2465–2514 (LPGV…YKQV), 2571–2640 (LSDI…NFVT), 2687–2754 (SDVS…FKLT), 2790–2835 (LPGV…TPIG), 2898–2947 (LPGV…YKQV), and 3004–3040 (LEGIELQLVDKDGKVIQSTTSGPDGKYQFEDVPPGDY). Asn-2476 carries N-linked (GlcNAc...) asparagine glycosylation. Positions 2580–2603 (DKDGNEITNTKSGPDGKYQFEDVP) are disordered. N-linked (GlcNAc...) asparagine glycosylation is present at Asn-2622. Residues Asn-2801 and Asn-2909 are each glycosylated (N-linked (GlcNAc...) asparagine). 3 N-linked (GlcNAc...) asparagine glycosylation sites follow: Asn-3048, Asn-3055, and Asn-3118. CNA-B domains follow at residues 3117 to 3184 (SNVS…FKLT), 3220 to 3256 (LPGVELSLQDPNGIVIQTITTDSDGNYYFDNLLPGDY), 3328 to 3364 (LPGVQVIITSSNGTKIADLVTDENGKYALKDQVPGSY), and 3434 to 3470 (VEGIELQLVDKDGKVIQSTTSGPDGKYQFEDVPPGDY). An N-linked (GlcNAc...) asparagine glycan is attached at Asn-3339. Asn-3485 carries N-linked (GlcNAc...) asparagine glycosylation. The stretch at 3503-3549 (SCFAVSGPLDNQNLGLSLFYEIGTMVWIDSNNNGKFEQPSDVLKSDV) is one Kelch 2 repeat. 3 CNA-B domains span residues 3547–3614 (SDVS…FKLT), 3650–3686 (LPGVELSLQDSNGKVLDTTTTDESGSYKFDNLLPGDY), and 3758–3809 (LPGV…QVAQ). 2 N-linked (GlcNAc...) asparagine glycosylation sites follow: Asn-3769 and Asn-3827. The 37-residue stretch at 3864–3900 (LSDITIRLTDKDGKVIQSTTSGPDGKYQFEDVPPGDY) folds into the CNA-B 33 domain. A glycan (N-linked (GlcNAc...) asparagine) is linked at Asn-3915. 8 consecutive CNA-B domains span residues 3980-4047 (SDVS…FKLT), 4083-4128 (LPGV…TPIG), 4191-4240 (LPGV…YKQV), 4297-4378 (LSDI…NFVT), 4425-4492 (SDVS…FKLT), 4528-4573 (LPGV…TPIG), 4636-4685 (LPGV…YKQV), and 4742-4778 (VEGIPLTLIDKYGNSIQSTASGPNGKYQFEDVPPGDY). Residue Asn-4202 is glycosylated (N-linked (GlcNAc...) asparagine). The interval 4286 to 4341 (NTGKQTDDSPPLSDITIRLTDKDGNEITKTKSRPDGNENSNTKSGPDGKYQFEDVP) is disordered. Positions 4304–4321 (LTDKDGNEITKTKSRPDG) are enriched in basic and acidic residues. N-linked (GlcNAc...) asparagine glycosylation occurs at Asn-4360. A glycan (N-linked (GlcNAc...) asparagine) is linked at Asn-4647. N-linked (GlcNAc...) asparagine glycans are attached at residues Asn-4792 and Asn-4918. CNA-B domains lie at 4865–4928 (ITLT…FKLT), 4964–5009 (LPGV…TPIG), 5072–5123 (LPGV…QVAQ), and 5178–5214 (LEGIELQLVDKDGKVIQSTTSGPNGKYQFEDVPPGDY). Asn-5083 carries N-linked (GlcNAc...) asparagine glycosylation. Residues Asn-5229, Asn-5292, and Asn-5348 are each glycosylated (N-linked (GlcNAc...) asparagine). The Kelch 3 repeat unit spans residues 5247-5293 (SCFAVSGPLDNQNLGLSPFYEIGTIVWIDSNNNDKFEQPSDIGKSNV). 4 consecutive CNA-B domains span residues 5291–5358 (SNVS…FKLT), 5394–5430 (LPGVELSLQDSNGKVLDTTTTDESGNYKFDNLLPGDY), 5502–5553 (LPGV…QVAQ), and 5608–5644 (LSDITIRLTDKDGNEITNTKSGPDGKYQFEDVPPGDY). Residue Asn-5513 is glycosylated (N-linked (GlcNAc...) asparagine). Asn-5659 is a glycosylation site (N-linked (GlcNAc...) asparagine). CNA-B domains follow at residues 5724–5791 (SDVS…FKLT), 5827–5872 (LPGV…TPIG), 5935–5984 (LPGV…YKQV), and 6041–6077 (VEGIELNLVDKDGKVIQSTTSGPDGKYQFEDVPPGDY). N-linked (GlcNAc...) asparagine glycosylation occurs at Asn-5946. 2 N-linked (GlcNAc...) asparagine glycosylation sites follow: Asn-6092 and Asn-6155. 4 consecutive CNA-B domains span residues 6154–6221 (SNVS…FKLT), 6257–6302 (LPGV…TPIG), 6365–6416 (LPGV…QDAQ), and 6471–6507 (LSDITIRLTDKDGNEITNTKSGPDGKYQFEDVPPGDY). Residue Asn-6376 is glycosylated (N-linked (GlcNAc...) asparagine). 2 N-linked (GlcNAc...) asparagine glycosylation sites follow: Asn-6522 and Asn-6535. 4 CNA-B domains span residues 6587–6654 (SDVS…FKLT), 6690–6726 (LEGVELSLQDPNGTVLQTITTDESGNYKFDNLLPGDY), 6798–6849 (LPGV…QVNQ), and 6904–6940 (VEGIPLTLIDKYGNSIQSTASGPNGKYQFEDVPPGDY). N-linked (GlcNAc...) asparagine glycosylation is found at Asn-6701, Asn-6809, and Asn-6848. 4 N-linked (GlcNAc...) asparagine glycosylation sites follow: Asn-6954, Asn-7080, Asn-7137, and Asn-7245. 8 consecutive CNA-B domains span residues 7023–7090 (SDVS…FKLT), 7126–7171 (LAGV…TPIG), 7234–7285 (LPGV…QDAQ), 7340–7411 (LSDI…VTVK), 7456–7523 (SDVS…FKLT), 7559–7596 (LPGVELSLQDSNGKVLDTTTTTDESGNYKFDNLLPGDY), 7668–7719 (LTGV…QVAQ), and 7774–7810 (VEGIELNLVDKDDKVIQSTTSGPDGKYQFEDVPPGDY). The interval 7351–7372 (DGNEITNTKSGPDGKYQFEDVP) is disordered. N-linked (GlcNAc...) asparagine glycosylation is found at Asn-7391 and Asn-7404. N-linked (GlcNAc...) asparagine glycosylation is present at Asn-7679. Asn-7825 and Asn-7837 each carry an N-linked (GlcNAc...) asparagine glycan. 7 consecutive CNA-B domains span residues 7887-7954 (SDVS…FKLT), 7990-8035 (LPGV…TPIG), 8098-8149 (LPGV…QVAQ), 8204-8265 (IPNI…FSLS), 8313-8374 (VGKS…VVDQ), 8420-8456 (LPGVELSLQDSNGKVLQTTTTNESGNYKFDNLPQGDY), and 8528-8587 (LPGI…PFDS). N-linked (GlcNAc...) asparagine glycosylation is found at Asn-8109 and Asn-8255. 57 N-linked (GlcNAc...) asparagine glycosylation sites follow: Asn-8441, Asn-8539, Asn-8629, Asn-8636, Asn-8655, Asn-8693, Asn-8753, Asn-8811, Asn-8896, Asn-8930, Asn-8976, Asn-9023, Asn-9073, Asn-9087, Asn-9123, Asn-9137, Asn-9146, Asn-9149, Asn-9186, Asn-9297, Asn-9305, Asn-9349, Asn-9409, Asn-9419, Asn-9533, Asn-9543, Asn-9556, Asn-9601, Asn-9709, Asn-9718, Asn-9786, Asn-9839, Asn-9850, Asn-9867, Asn-9891, Asn-9941, Asn-9957, Asn-9989, Asn-10042, Asn-10096, Asn-10111, Asn-10174, Asn-10267, Asn-10315, Asn-10348, Asn-10360, Asn-10379, Asn-10394, Asn-10431, Asn-10477, Asn-10552, Asn-10581, Asn-10715, Asn-10786, Asn-10802, Asn-10943, and Asn-11018. Residues 8592–8638 (CFDLLDKSITNANLGLIPLYNIGSDAWLDNLNNGVRRNDSLLVPNVT) form a Kelch 4 repeat. Residues 8634 to 8680 (VPNVTMSLYDNNGNLIETTITNSSGKYQFNDIQPGSYCVRATVPSNY) enclose the CNA-B 77 domain. A CNA-B 78 domain is found at 8751–8810 (LPNVTVQLYDKVSGNILAATRSDDKGGYVVPNLLPSADYCVQFEVPPGYIVVVDSDDSVT). The 50-residue stretch at 8965–9014 (LPGVSVSLFSPNGTSIANTITDENGKYAFKDQVPGSYCIKMIIPPHYQQV) folds into the CNA-B 79 domain. One can recognise a CNA-B 80 domain in the interval 9071-9107 (VPNITMTLLDSQGKQINSTITNANGFYQFVDVAPGNY). The CNA-B 81 domain occupies 9185-9220 (ANVSLSLVNTGNSEIKTTTTNSQGKYSFGQLLAGNY). The 34-residue stretch at 9299–9332 (TITLTPNNTALPTQTTTTDVNGNYRFDNLVVGNY) folds into the CNA-B 82 domain. CNA-B domains are found at residues 9407–9447 (LVNI…VVQF) and 9531–9569 (MANITVFLRSGSNLSQTIATTTTDANGTYIFTHLAPGNY). Residues 9659–9728 (VEGITVRIYD…ATGYISIDLS (70 aa)) enclose the CNA-B 85 domain. In terms of domain architecture, CNA-B 86 spans 10044–10103 (TLFNADGSTPNDIFGKPIQMAVTDVNGKYSIPNVPPGSYYMTVSIPPRYIISNFTTTGLV). The CNA-B 87 domain maps to 10172-10236 (LPNVTVLLLN…ITPTKLVSTS (65 aa)). The 58-residue stretch at 10313–10370 (PGNFTVQLKSANQAVNGGLTTVPIGTVVATSPVAANGSFSIPNLQLGNYTLTLIPPSG) folds into the CNA-B 88 domain.

Belongs to the serine-aspartate repeat-containing protein (SDr) family.

It localises to the secreted. The chain is Colossin-A (colA) from Dictyostelium discoideum (Social amoeba).